The primary structure comprises 438 residues: ATP phosphoribosyltransferase regulatory subunit (438 aa).

Belongs to the class-II aminoacyl-tRNA synthetase family. HisZ subfamily. In terms of assembly, heteromultimer composed of HisG and HisZ subunits.

It is found in the cytoplasm. Its pathway is amino-acid biosynthesis; L-histidine biosynthesis; L-histidine from 5-phospho-alpha-D-ribose 1-diphosphate: step 1/9. In terms of biological role, required for the first step of histidine biosynthesis. May allow the feedback regulation of ATP phosphoribosyltransferase activity by histidine. In Geobacter sulfurreducens (strain ATCC 51573 / DSM 12127 / PCA), this protein is ATP phosphoribosyltransferase regulatory subunit.